Reading from the N-terminus, the 529-residue chain is MGTQRNGYSKRETFILSVDVGTTSIRCHVYDKSASIRGSCSAKVSLLYPQPGWVEIDPDELWDGFVTVVKGAVQDSGLQMCQMESLGISTQRATFMTWDRNTGKPFHKFITWQDMRAAELVRSWNGSCTMKTVHGVMKMLHFLSRQKRFLAASLVVFTTQHVSLRLVWALNNIPQLRQAVEDGTCYFGTIDTWLLYKLTKGLVHATDYSNASATAIFDSYQMCWSGFLCSLLSIPLSILPKVQDTSHKFGLCDSSIFGVPIPIMCVMADQQAAMFGECCFDTGDVKITMGTGTFMDINTGSKPHTSVAGLYPLVGWKIGADVVYLAEGNAAGTGAAIKWAQDLELFSDVKETEAIATSVEDSDGVFFVPSFSGLQAPLNDPKACASFMGLKPSTTKRHLVRAILESIAFRNKQLFDVMLRETRIPITKIRADGGVCTNDFIMQLTADLLGRKIARPSHFDMSCLGAAFVAGLGTGYWRNQEELKKLLSTDQHFLPRRSKSEGEKGGLYRGVLQSWEKALQRSMHWYNQP.

ATP contacts are provided by T22 and T23. Residues R92, D269, and Q270 each coordinate glycerol. The ATP site is built by T291, G334, and G434.

The protein belongs to the FGGY kinase family.

The protein resides in the cytoplasm. It carries out the reaction glycerol + ATP = sn-glycerol 3-phosphate + ADP + H(+). It functions in the pathway polyol metabolism; glycerol degradation via glycerol kinase pathway; sn-glycerol 3-phosphate from glycerol: step 1/1. Skin-specific kinase that plays a key role in glycerol metabolism, catalyzing its phosphorylation to produce sn-glycerol 3-phosphate. Involved in skin-specific regulation of sterol regulatory element-binding protein (SREBP) processing and lipid biosynthesis. The chain is Glycerol kinase 5 (gk5) from Danio rerio (Zebrafish).